The primary structure comprises 454 residues: L-serine dehydratase 1 (454 aa).

It belongs to the iron-sulfur dependent L-serine dehydratase family. [4Fe-4S] cluster serves as cofactor. Post-translationally, activated by post-translational modification by a system involving at least three gene products. Activation is mimicked in vitro by iron and dithiothreitol. There is considerable evidence for a free-radical activation mechanism.

The enzyme catalyses L-serine = pyruvate + NH4(+). The protein operates within carbohydrate biosynthesis; gluconeogenesis. Its function is as follows. Also deaminates threonine, particularly when it is present in high concentration. The polypeptide is L-serine dehydratase 1 (sdaA) (Escherichia coli (strain K12)).